We begin with the raw amino-acid sequence, 35 residues long: Photosystem II reaction center protein M (35 aa).

A helical membrane pass occupies residues 5–25; that stretch reads ILAVIATALFIIIPTSFLLIL.

The protein belongs to the PsbM family. PSII is composed of 1 copy each of membrane proteins PsbA, PsbB, PsbC, PsbD, PsbE, PsbF, PsbH, PsbI, PsbJ, PsbK, PsbL, PsbM, PsbT, PsbX, PsbY, PsbZ, Psb30/Ycf12, at least 3 peripheral proteins of the oxygen-evolving complex and a large number of cofactors. It forms dimeric complexes.

It is found in the plastid. Its subcellular location is the chloroplast thylakoid membrane. Its function is as follows. One of the components of the core complex of photosystem II (PSII). PSII is a light-driven water:plastoquinone oxidoreductase that uses light energy to abstract electrons from H(2)O, generating O(2) and a proton gradient subsequently used for ATP formation. It consists of a core antenna complex that captures photons, and an electron transfer chain that converts photonic excitation into a charge separation. This subunit is found at the monomer-monomer interface. This is Photosystem II reaction center protein M from Staurastrum punctulatum (Green alga).